The chain runs to 1053 residues: uncharacterized protein (1053 aa).

Belongs to the mycobacterial PPE family.

This is an uncharacterized protein from Mycobacterium tuberculosis (strain ATCC 25618 / H37Rv).